We begin with the raw amino-acid sequence, 79 residues long: MKTQVLALFVLCVLFCLAESRTTLNKRNDIEKRIECKCEGDAPDLSHMTGTVYFSCKGGDGSWSKCNTYTAVADCCHQA.

The first 20 residues, 1–20, serve as a signal peptide directing secretion; sequence MKTQVLALFVLCVLFCLAES. A propeptide spanning residues 21 to 31 is cleaved from the precursor; sequence RTTLNKRNDIE. Disulfide bonds link Cys36-Cys75, Cys38-Cys66, and Cys56-Cys76.

Belongs to the sea anemone sodium channel inhibitory toxin family.

The protein resides in the secreted. The protein localises to the nematocyst. Its function is as follows. In neuromuscular preparation of crustaceans, the toxin increased neurotransmitter release, causing repetitive firing of the axons. May affect sodium channels (Nav). This is Delta-hormotoxin-Cpt1b from Calliactis parasitica (Sea anemone).